The following is a 268-amino-acid chain: tRNA pseudouridine synthase A (268 aa).

Aspartate 52 functions as the Nucleophile in the catalytic mechanism. Tyrosine 110 lines the substrate pocket.

Belongs to the tRNA pseudouridine synthase TruA family. Homodimer.

The catalysed reaction is uridine(38/39/40) in tRNA = pseudouridine(38/39/40) in tRNA. In terms of biological role, formation of pseudouridine at positions 38, 39 and 40 in the anticodon stem and loop of transfer RNAs. This is tRNA pseudouridine synthase A from Prochlorococcus marinus (strain MIT 9312).